Reading from the N-terminus, the 303-residue chain is Aquaporin NIP1-2 (303 aa).

Residues methionine 1–cysteine 39 are disordered. Positions glutamine 17–serine 26 are enriched in basic and acidic residues. 2 helical membrane passes run isoleucine 66 to valine 86 and glycine 91 to valine 111. The NPA 1 signature appears at asparagine 123–alanine 125. 3 helical membrane passes run valine 145–glycine 165, alanine 188–threonine 208, and alanine 212–alanine 232. Residues asparagine 241 to alanine 243 carry the NPA 2 motif. A helical membrane pass occupies residues tyrosine 255 to alanine 275.

It belongs to the MIP/aquaporin (TC 1.A.8) family. NIP (TC 1.A.8.12) subfamily. As to expression, expressed in roots and leaves, and at lower levels in anthers.

The protein resides in the membrane. Its function is as follows. Aquaporins facilitate the transport of water and small neutral solutes across cell membranes. This chain is Aquaporin NIP1-2 (NIP1-2), found in Oryza sativa subsp. japonica (Rice).